We begin with the raw amino-acid sequence, 151 residues long: Probable cGMP 3',5'-cyclic phosphodiesterase subunit delta (151 aa).

This sequence belongs to the PDE6D/unc-119 family. As to quaternary structure, interacts with Pde6.

It is found in the nucleus. Its subcellular location is the cytoplasm. This Drosophila simulans (Fruit fly) protein is Probable cGMP 3',5'-cyclic phosphodiesterase subunit delta.